The chain runs to 293 residues: FAS1 domain-containing protein DEHA2G15708g (293 aa).

A signal peptide spans 1–18 (MKLSSILYVSVLAHLVMS). Positions 76–87 (DHIGENEKREAK) are enriched in basic and acidic residues. The segment at 76-126 (DHIGENEKREAKNVYNLQSLKEGLDDENDKREGNVNKPEVSEEGSNKGDKR) is disordered. An FAS1 domain is found at 141–290 (QNLLQSILPQ…GYIFVINDVL (150 aa)).

The protein localises to the vacuole. The sequence is that of FAS1 domain-containing protein DEHA2G15708g from Debaryomyces hansenii (strain ATCC 36239 / CBS 767 / BCRC 21394 / JCM 1990 / NBRC 0083 / IGC 2968) (Yeast).